We begin with the raw amino-acid sequence, 155 residues long: 6,7-dimethyl-8-ribityllumazine synthase (155 aa).

5-amino-6-(D-ribitylamino)uracil-binding positions include Trp-23, Ala-57–Glu-59, and Cys-81–Ile-83. Asp-86–Thr-87 provides a ligand contact to (2S)-2-hydroxy-3-oxobutyl phosphate. Residue His-89 is the Proton donor of the active site. Residue Asn-114 participates in 5-amino-6-(D-ribitylamino)uracil binding. Arg-128 is a (2S)-2-hydroxy-3-oxobutyl phosphate binding site.

It belongs to the DMRL synthase family. Forms an icosahedral capsid composed of 60 subunits, arranged as a dodecamer of pentamers.

It carries out the reaction (2S)-2-hydroxy-3-oxobutyl phosphate + 5-amino-6-(D-ribitylamino)uracil = 6,7-dimethyl-8-(1-D-ribityl)lumazine + phosphate + 2 H2O + H(+). It participates in cofactor biosynthesis; riboflavin biosynthesis; riboflavin from 2-hydroxy-3-oxobutyl phosphate and 5-amino-6-(D-ribitylamino)uracil: step 1/2. Its function is as follows. Catalyzes the formation of 6,7-dimethyl-8-ribityllumazine by condensation of 5-amino-6-(D-ribitylamino)uracil with 3,4-dihydroxy-2-butanone 4-phosphate. This is the penultimate step in the biosynthesis of riboflavin. This Stenotrophomonas maltophilia (strain K279a) protein is 6,7-dimethyl-8-ribityllumazine synthase.